Reading from the N-terminus, the 310-residue chain is p-hydroxybenzoic acid efflux pump subunit AaeA (310 aa).

A helical transmembrane segment spans residues 12-32 (VITLLLVIIAIVLIFRIWVFY).

The protein belongs to the membrane fusion protein (MFP) (TC 8.A.1) family.

It localises to the cell inner membrane. Functionally, forms an efflux pump with AaeB. This Erwinia tasmaniensis (strain DSM 17950 / CFBP 7177 / CIP 109463 / NCPPB 4357 / Et1/99) protein is p-hydroxybenzoic acid efflux pump subunit AaeA.